A 973-amino-acid chain; its full sequence is FHF complex subunit HOOK-interacting protein 1B (973 aa).

Disordered stretches follow at residues 466-493, 510-547, and 573-647; these read SSPSRPEHASWARGPGSPSVDSSSVVTV, SLGGSESPAPAPRSPGLATSPASSPGRRPSPVEEPGEL, and SAPY…EGAK. Serine 467 carries the phosphoserine modification. The span at 482–493 shows a compositional bias: low complexity; it reads SPSVDSSSVVTV. Phosphoserine occurs at positions 510, 523, 529, and 533. Composition is skewed to low complexity over residues 529–538 and 622–639; these read SPASSPGRRP and GARESLGHLPPPQLNGLP. 2 positions are modified to phosphoserine: serine 859 and serine 898.

Belongs to the FHIP family. In terms of assembly, component of the FTS/Hook/FHIP complex (FHF complex), composed of AKTIP/FTS, FHIP1B, and one or more members of the Hook family of proteins HOOK1, HOOK2, and HOOK3. The FHF complex associates with the homotypic vesicular sorting complex (the HOPS complex).

Its function is as follows. Component of the FTS/Hook/FHIP complex (FHF complex). The FHF complex may function to promote vesicle trafficking and/or fusion via the homotypic vesicular protein sorting complex (the HOPS complex). FHF complex promotes the distribution of AP-4 complex to the perinuclear area of the cell. This is FHF complex subunit HOOK-interacting protein 1B (FHIP1B) from Bos taurus (Bovine).